A 127-amino-acid chain; its full sequence is Fumarate reductase subunit C (127 aa).

3 helical membrane passes run 30–50 (ATVLPLIFFTICLLVGLGSLV), 67–87 (IVVALNIVALAGSLFHAQTFF), and 107–127 (VVVLAQWAAVAAITLLVLVIV).

The protein belongs to the FrdC family. As to quaternary structure, part of an enzyme complex containing four subunits: a flavoprotein (FrdA), an iron-sulfur protein (FrdB), and two hydrophobic anchor proteins (FrdC and FrdD).

It localises to the cell inner membrane. Functionally, anchors the catalytic components of the fumarate reductase complex to the cell membrane, binds quinones. This chain is Fumarate reductase subunit C, found in Aliivibrio fischeri (strain ATCC 700601 / ES114) (Vibrio fischeri).